The chain runs to 306 residues: MTWPNRDQPAFPSSSSGAFSALPQGVSHGGVNLSSFSDFLRHQAPHLLPGAPGPGPTGLPTDAVPHGTTIVALKCPGGVVMAGDRRATQGNMIASRDVQKVYITDDYTVTGIAGTAAIAVEFARLYAVELEHYEKLEGVALTFPGKVNRLATMVRGNLGAALQGFVALPLLAGYDLDDPNPEAAGRIVSFDAAGGWNFEEEGYQSVGSGSIFAKSSMKKLYSQVTDAESALRVAVEALYDAADDDSATGGPDLVRGIFPTAVVIGADGAHEVPEAKISSLCREVVENRSRTETFGPDARPTRGDEL.

Positions M1 to G67 are cleaved as a propeptide — removed in mature form; by autocatalysis. The active-site Nucleophile is the T68.

Belongs to the peptidase T1B family. In terms of assembly, the 20S proteasome core is composed of 14 alpha and 14 beta subunits that assemble into four stacked heptameric rings, resulting in a barrel-shaped structure. The two inner rings, each composed of seven catalytic beta subunits, are sandwiched by two outer rings, each composed of seven alpha subunits. The catalytic chamber with the active sites is on the inside of the barrel. Has a gated structure, the ends of the cylinder being occluded by the N-termini of the alpha-subunits. Is capped by the proteasome-associated ATPase, ARC.

It localises to the cytoplasm. It carries out the reaction Cleavage of peptide bonds with very broad specificity.. Its pathway is protein degradation; proteasomal Pup-dependent pathway. With respect to regulation, the formation of the proteasomal ATPase ARC-20S proteasome complex, likely via the docking of the C-termini of ARC into the intersubunit pockets in the alpha-rings, may trigger opening of the gate for substrate entry. Interconversion between the open-gate and close-gate conformations leads to a dynamic regulation of the 20S proteasome proteolysis activity. Functionally, component of the proteasome core, a large protease complex with broad specificity involved in protein degradation. The sequence is that of Proteasome subunit beta from Mycolicibacterium vanbaalenii (strain DSM 7251 / JCM 13017 / BCRC 16820 / KCTC 9966 / NRRL B-24157 / PYR-1) (Mycobacterium vanbaalenii).